Here is a 150-residue protein sequence, read N- to C-terminus: Large ribosomal subunit protein bL9 (150 aa).

Belongs to the bacterial ribosomal protein bL9 family.

Functionally, binds to the 23S rRNA. The sequence is that of Large ribosomal subunit protein bL9 from Streptococcus pyogenes serotype M5 (strain Manfredo).